A 101-amino-acid chain; its full sequence is Ubiquitin-related modifier 1 homolog (101 aa).

Gly-101 is modified (1-thioglycine). Residue Gly-101 forms a Glycyl lysine isopeptide (Gly-Lys) (interchain with K-? in acceptor proteins) linkage.

The protein belongs to the URM1 family. In terms of assembly, interacts with cer. Post-translationally, C-terminal thiocarboxylation occurs in 2 steps, it is first acyl-adenylated (-COAMP) via the hesA/moeB/thiF part of the MOCS3 homolog, then thiocarboxylated (-COSH) via the rhodanese domain of the MOCS3 homolog.

The protein resides in the cytoplasm. The protein operates within tRNA modification; 5-methoxycarbonylmethyl-2-thiouridine-tRNA biosynthesis. Acts as a sulfur carrier required for 2-thiolation of mcm(5)S(2)U at tRNA wobble positions of cytosolic tRNA(Lys), tRNA(Glu) and tRNA(Gln). Serves as sulfur donor in tRNA 2-thiolation reaction by being thiocarboxylated (-COSH) at its C-terminus by MOCS3. The sulfur is then transferred to tRNA to form 2-thiolation of mcm(5)S(2)U. Also acts as a ubiquitin-like protein (UBL) that is covalently conjugated via an isopeptide bond to lysine residues of target proteins such as Prx2/Jafrac1, Ciao1, Eip71CD and GILT1. The thiocarboxylated form serves as substrate for conjugation and oxidative stress specifically induces the formation of UBL-protein conjugates. The polypeptide is Ubiquitin-related modifier 1 homolog (Drosophila yakuba (Fruit fly)).